The primary structure comprises 407 residues: WEB family protein At3g51720 (407 aa).

3 coiled-coil regions span residues 72–99 (KVLK…DKEN), 128–217 (SVGL…ARAA), and 247–278 (EEIL…EAEE).

The protein belongs to the WEB family.

The sequence is that of WEB family protein At3g51720 from Arabidopsis thaliana (Mouse-ear cress).